Here is a 282-residue protein sequence, read N- to C-terminus: Autophagy protein 5 (282 aa).

Residue Lys144 forms a Glycyl lysine isopeptide (Lys-Gly) (interchain with G-Cter in ATG12) linkage.

It belongs to the ATG5 family. Conjugated with ATG12. Post-translationally, conjugated to ATG12; which is essential for autophagy.

The protein resides in the preautophagosomal structure membrane. Involved in cytoplasm to vacuole transport (Cvt) and autophagic vesicle formation. Autophagy is essential for maintenance of amino acid levels and protein synthesis under nitrogen starvation. Required for selective autophagic degradation of the nucleus (nucleophagy). Also required for mitophagy, which eliminates defective or superfluous mitochondria in order to fulfill cellular energy requirements and prevent excess ROS production. Conjugation with ATG12, through a ubiquitin-like conjugating system involving ATG7 as an E1-like activating enzyme and ATG10 as an E2-like conjugating enzyme, is essential for its function. The ATG12-ATG5 conjugate acts as an E3-like enzyme which is required for lipidation of ATG8 and ATG8 association to the vesicle membranes. The protein is Autophagy protein 5 (ATG5) of Scheffersomyces stipitis (strain ATCC 58785 / CBS 6054 / NBRC 10063 / NRRL Y-11545) (Yeast).